The primary structure comprises 451 residues: uncharacterized protein (451 aa).

2 disordered regions span residues 89 to 150 (PRLS…ISRY) and 164 to 222 (QVGE…KTFG). Residues 104–121 (QKPTISRESFVWESSASI) show a composition bias toward polar residues. The span at 137–147 (SSTPSIEPESI) shows a compositional bias: low complexity. Basic and acidic residues predominate over residues 175–222 (RAADSENERRPSEVREAPESRRRRETSETGSDKSKAPPPIKEIKKTFG). The helical transmembrane segment at 358–376 (LIGLMLFQTTIFIISKIIA) threads the bilayer. The interval 401-451 (RNGSSSGFASGTSSPLVFIPRTKRPSLVPSEKKMRGPSVTRDLAAEQERDA) is disordered. The segment covering 403-414 (GSSSGFASGTSS) has biased composition (low complexity).

This sequence belongs to the IIV-6 067R family.

Its subcellular location is the membrane. This is an uncharacterized protein from Invertebrate iridescent virus 3 (IIV-3).